The primary structure comprises 206 residues: Protein Nef (206 aa).

A disordered region spans residues 1–46; the sequence is MGNKWSKCSTVGRPAIRERMRRAPAAEGVGPASQDSDKYGALTSSS. Gly2 is lipidated: N-myristoyl glycine; by host. At Ser6 the chain carries Phosphoserine; by host. Residues 61 to 65 are acidic; interacts with host PACS1 and PACS2; stabilizes the interaction of NEF/MHC-I with host AP1M1; necessary for MHC-I internalization; the sequence is QEEEE. The segment at 69 to 78 is SH3-binding; interaction with Src family tyrosine kinases; that stretch reads PVRPQVPLRP. Positions 72 to 75 match the PxxP; stabilizes the interaction of NEF/MHC-I with host AP1M1; necessary for MHC-I internalization motif; the sequence is PQVP. The interval 108-124 is mediates dimerization, Nef-PTE1 interaction; that stretch reads DILDLWVYNTQGYFPDW. Positions 148-180 are binding to ATP6V1H; sequence VDPREVEEANTGENNSLLHPMSLHGMEDSHREV. The Dileucine internalization motif; necessary for CD4 internalization motif lies at 164–165; the sequence is LL. A Diacidic; necessary for CD4 internalization motif is present at residues 174 to 175; the sequence is ED.

This sequence belongs to the lentivirus primate group Nef protein family. Monomer; cytosolic form. Homodimer; membrane bound form. Interacts with Nef associated p21-activated kinase (PAK2); this interaction activates PAK2. Associates with the Nef-MHC-I-AP1 complex; this complex is required for MHC-I internalization. Interacts (via C-terminus) with host PI3-kinase. Interacts with host PACS1; this interaction seems to be weak. Interacts with host PACS2. Interacts with host LCK and MAPK3; these interactions inhibit the kinase activity of the latter. Interacts with host ATP6V1H; this interaction may play a role in CD4 endocytosis. Associates with the CD4-Nef-AP2 complex; this complex is required for CD4 internalization. Interacts with host AP2 subunit alpha and AP2 subunit sigma2. Interacts with TCR-zeta chain; this interaction up-regulates the Fas ligand (FasL) surface expression. Interacts with host HCK, LYN, and SRC; these interactions activate the Src family kinases. Interacts with MAP3K5; this interaction inhibits the Fas and TNFR-mediated death signals. Interacts with beta-COP and PTE1. Interacts with human RACK1; this increases Nef phosphorylation by PKC. Interacts with TP53; this interaction decreases the half-life of TP53, protecting the infected cell against p53-mediated apoptosis. Post-translationally, the virion-associated Nef proteins are cleaved by the viral protease to release the soluble C-terminal core protein. Nef is probably cleaved concomitantly with viral structural proteins on maturation of virus particles. In terms of processing, myristoylated. Phosphorylated on serine residues, probably by host PKCdelta and theta.

The protein localises to the host cell membrane. Its subcellular location is the virion. It localises to the secreted. It is found in the host Golgi apparatus membrane. Functionally, factor of infectivity and pathogenicity, required for optimal virus replication. Alters numerous pathways of T-lymphocyte function and down-regulates immunity surface molecules in order to evade host defense and increase viral infectivity. Alters the functionality of other immunity cells, like dendritic cells, monocytes/macrophages and NK cells. Its function is as follows. In infected CD4(+) T-lymphocytes, down-regulates the surface MHC-I, mature MHC-II, CD4, CD28, CCR5 and CXCR4 molecules. Mediates internalization and degradation of host CD4 through the interaction of with the cytoplasmic tail of CD4, the recruitment of AP-2 (clathrin adapter protein complex 2), internalization through clathrin coated pits, and subsequent transport to endosomes and lysosomes for degradation. Diverts host MHC-I molecules to the trans-Golgi network-associated endosomal compartments by an endocytic pathway to finally target them for degradation. MHC-I down-regulation may involve AP-1 (clathrin adapter protein complex 1) or possibly Src family kinase-ZAP70/Syk-PI3K cascade recruited by PACS2. In consequence infected cells are masked for immune recognition by cytotoxic T-lymphocytes. Decreasing the number of immune receptors also prevents reinfection by more HIV particles (superinfection). Down-regulates host SERINC3 and SERINC5 thereby excluding these proteins from the viral particles. Virion infectivity is drastically higher when SERINC3 or SERINC5 are excluded from the viral envelope, because these host antiviral proteins impair the membrane fusion event necessary for subsequent virion penetration. Bypasses host T-cell signaling by inducing a transcriptional program nearly identical to that of anti-CD3 cell activation. Interaction with TCR-zeta chain up-regulates the Fas ligand (FasL). Increasing surface FasL molecules and decreasing surface MHC-I molecules on infected CD4(+) cells send attacking cytotoxic CD8+ T-lymphocytes into apoptosis. In terms of biological role, plays a role in optimizing the host cell environment for viral replication without causing cell death by apoptosis. Protects the infected cells from apoptosis in order to keep them alive until the next virus generation is ready to strike. Inhibits the Fas and TNFR-mediated death signals by blocking MAP3K5/ASK1. Decreases the half-life of TP53, protecting the infected cell against p53-mediated apoptosis. Inhibits the apoptotic signals regulated by the Bcl-2 family proteins through the formation of a Nef/PI3-kinase/PAK2 complex that leads to activation of PAK2 and induces phosphorylation of host BAD. Functionally, extracellular Nef protein targets CD4(+) T-lymphocytes for apoptosis by interacting with CXCR4 surface receptors. This is Protein Nef from Human immunodeficiency virus type 1 group M subtype C (isolate 92BR025) (HIV-1).